A 1798-amino-acid chain; its full sequence is Focadhesin (1798 aa).

K816 is modified (N6-acetyllysine).

Interacts with VCL. In terms of tissue distribution, expressed by glial and neuronal cells in brain.

Its subcellular location is the cell junction. It is found in the focal adhesion. The protein resides in the cytoplasm. It localises to the cytosol. In terms of biological role, required for the maintenance of SKIC2 and SKIC3 proteostatic levels in the liver. May be involved in the regulation of RNA degradation by the exosome complex. Potential tumor suppressor in gliomas. The chain is Focadhesin (Focad) from Mus musculus (Mouse).